A 471-amino-acid polypeptide reads, in one-letter code: N-succinylglutamate 5-semialdehyde dehydrogenase (471 aa).

207–212 (GSAHAG) is an NAD(+) binding site. Active-site residues include E230 and C264.

The protein belongs to the aldehyde dehydrogenase family. AstD subfamily.

It catalyses the reaction N-succinyl-L-glutamate 5-semialdehyde + NAD(+) + H2O = N-succinyl-L-glutamate + NADH + 2 H(+). The protein operates within amino-acid degradation; L-arginine degradation via AST pathway; L-glutamate and succinate from L-arginine: step 4/5. In terms of biological role, catalyzes the NAD-dependent reduction of succinylglutamate semialdehyde into succinylglutamate. This Novosphingobium aromaticivorans (strain ATCC 700278 / DSM 12444 / CCUG 56034 / CIP 105152 / NBRC 16084 / F199) protein is N-succinylglutamate 5-semialdehyde dehydrogenase.